Consider the following 283-residue polypeptide: Digeranylgeranylglyceryl phosphate synthase (283 aa).

The next 8 helical transmembrane spans lie at 21–41, 45–65, 97–117, 135–155, 158–178, 204–224, 226–246, and 261–281; these read ITASIGGIIGYLISSNFEIDI, LLVFFVVFFVCAYGNVINDIF, LILGLVLSLFINIYALIIAVI, IGNFIIGYLTGSVFLFGGVAG, VMPVVILFLCSLLSIWGREIV, LYFATFLVVLAVILSPLPYIL, IFGIWYLILIAICDILFIYAM, and VSKFLKIIMNIVLLAFIVGAI.

Belongs to the UbiA prenyltransferase family. DGGGP synthase subfamily. The cofactor is Mg(2+).

It is found in the cell membrane. The catalysed reaction is sn-3-O-(geranylgeranyl)glycerol 1-phosphate + (2E,6E,10E)-geranylgeranyl diphosphate = 2,3-bis-O-(geranylgeranyl)-sn-glycerol 1-phosphate + diphosphate. Its pathway is membrane lipid metabolism; glycerophospholipid metabolism. In terms of biological role, prenyltransferase that catalyzes the transfer of the geranylgeranyl moiety of geranylgeranyl diphosphate (GGPP) to the C2 hydroxyl of (S)-3-O-geranylgeranylglyceryl phosphate (GGGP). This reaction is the second ether-bond-formation step in the biosynthesis of archaeal membrane lipids. The protein is Digeranylgeranylglyceryl phosphate synthase of Methanocaldococcus jannaschii (strain ATCC 43067 / DSM 2661 / JAL-1 / JCM 10045 / NBRC 100440) (Methanococcus jannaschii).